Reading from the N-terminus, the 133-residue chain is Small ribosomal subunit protein eS24 (133 aa).

Methionine 1 carries the N-acetylmethionine modification. Residue threonine 9 is modified to Phosphothreonine. A Glycyl lysine isopeptide (Lys-Gly) (interchain with G-Cter in SUMO2) cross-link involves residue lysine 37. Residues 92–133 form a disordered region; the sequence is ARHGLYEKKKTSRKQRKERKNRMKKVRGTAKANVGAGKKPKE. Positions 101-119 are enriched in basic residues; the sequence is KTSRKQRKERKNRMKKVRG.

This sequence belongs to the eukaryotic ribosomal protein eS24 family. In terms of assembly, component of the small ribosomal subunit. Part of the small subunit (SSU) processome, composed of more than 70 proteins and the RNA chaperone small nucleolar RNA (snoRNA) U3.

It localises to the cytoplasm. Its subcellular location is the nucleus. The protein resides in the nucleolus. Component of the small ribosomal subunit. The ribosome is a large ribonucleoprotein complex responsible for the synthesis of proteins in the cell. Required for processing of pre-rRNA and maturation of 40S ribosomal subunits. Part of the small subunit (SSU) processome, first precursor of the small eukaryotic ribosomal subunit. During the assembly of the SSU processome in the nucleolus, many ribosome biogenesis factors, an RNA chaperone and ribosomal proteins associate with the nascent pre-rRNA and work in concert to generate RNA folding, modifications, rearrangements and cleavage as well as targeted degradation of pre-ribosomal RNA by the RNA exosome. The polypeptide is Small ribosomal subunit protein eS24 (RPS24) (Oryctolagus cuniculus (Rabbit)).